The following is a 130-amino-acid chain: Small ribosomal subunit protein uS11 (130 aa).

This sequence belongs to the universal ribosomal protein uS11 family. Part of the 30S ribosomal subunit.

Located on the platform of the 30S subunit. The sequence is that of Small ribosomal subunit protein uS11 from Ignicoccus hospitalis (strain KIN4/I / DSM 18386 / JCM 14125).